The primary structure comprises 2188 residues: Glutamate synthase 2 [NADH], chloroplastic (2188 aa).

The N-terminal 30 residues, 1 to 30 (MSAAQGLALKLRAAPAAGGVRGEKRRRAAS), are a transit peptide targeting the chloroplast. Disordered regions lie at residues 14–40 (APAA…ARPR) and 61–94 (VAPR…PESS). Over residues 65–80 (ASASRQAEAGAGAGAA) the composition is skewed to low complexity. Cys107 acts as the Nucleophile in catalysis. Residues 107–511 (CGVGFIAELS…PGMMLLVDFE (405 aa)) enclose the Glutamine amidotransferase type-2 domain. Residue 1198 to 1255 (LAETHQTLVANGLRGRAVLQTDGQMKTGRDVAVACLLGAEEFGFSTAPLITLGCIMMR) coordinates FMN. Positions 1251, 1257, and 1262 each coordinate [3Fe-4S] cluster. 1974 to 1988 (GGGDTGTDCIGTSIR) is an NAD(+) binding site.

It belongs to the glutamate synthase family. In terms of assembly, monomer. The cofactor is [3Fe-4S] cluster. It depends on FAD as a cofactor. Requires FMN as cofactor. In terms of tissue distribution, expressed in leaf blades and sheaths.

It is found in the plastid. Its subcellular location is the chloroplast. The catalysed reaction is 2 L-glutamate + NAD(+) = L-glutamine + 2-oxoglutarate + NADH + H(+). Its pathway is amino-acid biosynthesis; L-glutamate biosynthesis via GLT pathway; L-glutamate from 2-oxoglutarate and L-glutamine (NAD(+) route): step 1/1. It participates in energy metabolism; nitrogen metabolism. Functionally, involved in glutamate biosynthesis. The sequence is that of Glutamate synthase 2 [NADH], chloroplastic from Oryza sativa subsp. japonica (Rice).